A 63-amino-acid polypeptide reads, in one-letter code: UPF0337 protein PSPTO_1596 (63 aa).

Residues 20-63 (KQAVGKATDNTKLQAEGKAQELKGEGQQAKGEVKDAVKKGVDKV) form a disordered region. The span at 50 to 63 (GEVKDAVKKGVDKV) shows a compositional bias: basic and acidic residues.

This sequence belongs to the UPF0337 (CsbD) family.

This Pseudomonas syringae pv. tomato (strain ATCC BAA-871 / DC3000) protein is UPF0337 protein PSPTO_1596.